The sequence spans 203 residues: MEPVLVYNKRETFTKSNLNKLRKEGYIPAVAYGDDIKSLPGYVSKKEFEKLYKQKGLAGKIKILIDGKERTALIKEVQTHYVKGNIIHVDFQILSENKPIYVEVPIVFENAEILKSRGLVLQRQIDTVEIEGLPKDIPEHLVIDLMEYEKPTAIKLRDIKLPEGIKITEDLDEVVAVIDVSEITEEPETEEKKEEGASSVSNS.

The segment at 182–203 (EITEEPETEEKKEEGASSVSNS) is disordered.

This sequence belongs to the bacterial ribosomal protein bL25 family. CTC subfamily. In terms of assembly, part of the 50S ribosomal subunit; part of the 5S rRNA/L5/L18/L25 subcomplex. Contacts the 5S rRNA. Binds to the 5S rRNA independently of L5 and L18.

Its function is as follows. This is one of the proteins that binds to the 5S RNA in the ribosome where it forms part of the central protuberance. This Caldicellulosiruptor saccharolyticus (strain ATCC 43494 / DSM 8903 / Tp8T 6331) protein is Large ribosomal subunit protein bL25.